The chain runs to 396 residues: S-adenosylmethionine synthase 2 (396 aa).

Glu13 lines the Mg(2+) pocket. Residue His19 coordinates ATP. A K(+)-binding site is contributed by Glu47. Residues Glu60 and Gln103 each contribute to the L-methionine site. ATP-binding positions include 171-173 (DGK), 239-242 (SGRF), Asp250, 256-257 (RK), Ala273, Lys277, and Lys281. Asp250 provides a ligand contact to L-methionine. Lys281 is a binding site for L-methionine.

The protein belongs to the AdoMet synthase family. As to quaternary structure, homotetramer. Mn(2+) serves as cofactor. Requires Mg(2+) as cofactor. It depends on Co(2+) as a cofactor. The cofactor is K(+). Expressed in roots, stems and leaves (at protein level).

The protein resides in the cytoplasm. The enzyme catalyses L-methionine + ATP + H2O = S-adenosyl-L-methionine + phosphate + diphosphate. The protein operates within amino-acid biosynthesis; S-adenosyl-L-methionine biosynthesis; S-adenosyl-L-methionine from L-methionine: step 1/1. Functionally, catalyzes the formation of S-adenosylmethionine from methionine and ATP. The reaction comprises two steps that are both catalyzed by the same enzyme: formation of S-adenosylmethionine (AdoMet) and triphosphate, and subsequent hydrolysis of the triphosphate. May be involved in the synthesis of betain in response to abiotic stress such as high salinity. The chain is S-adenosylmethionine synthase 2 (SAMS2) from Atriplex nummularia (Old man saltbush).